A 209-amino-acid polypeptide reads, in one-letter code: Outer-membrane lipoprotein carrier protein (209 aa).

An N-terminal signal peptide occupies residues 1 to 21 (MHRQLRYAVLATALFASTAFA).

This sequence belongs to the LolA family. As to quaternary structure, monomer.

Its subcellular location is the periplasm. Its function is as follows. Participates in the translocation of lipoproteins from the inner membrane to the outer membrane. Only forms a complex with a lipoprotein if the residue after the N-terminal Cys is not an aspartate (The Asp acts as a targeting signal to indicate that the lipoprotein should stay in the inner membrane). This chain is Outer-membrane lipoprotein carrier protein, found in Xanthomonas axonopodis pv. citri (strain 306).